The primary structure comprises 689 residues: SH3 domain-binding protein 1 (689 aa).

Residues 1–11 (MMKRQLHRMRQ) are compositionally biased toward basic residues. Positions 1 to 24 (MMKRQLHRMRQLAHTGSSGRTPET) are disordered. Residues 1–275 (MMKRQLHRMR…TAAPFSRVYG (275 aa)) are interaction with CGNL1. In terms of domain architecture, BAR spans 17–262 (SSGRTPETAE…RDNHSQADSS (246 aa)). Phosphoserine occurs at positions 241 and 262. Positions 276–469 (VSLRTHLQDL…VLIQNADTLF (194 aa)) constitute a Rho-GAP domain. Positions 470-689 (PGDINFSVSG…RPRGLISETD (220 aa)) are interaction with CD2AP. Residues 507-689 (TAATPTPTPA…RPRGLISETD (183 aa)) are disordered. 2 positions are modified to phosphoserine: Ser539 and Ser545. Positions 565 to 575 (PARPTMPPPQP) are enriched in pro residues. Residues 576–594 (SSSRSSPPALSLPAGSVSP) are compositionally biased toward low complexity. Ser586 is subject to Phosphoserine. Thr596 bears the Phosphothreonine mark. The SH3-binding motif lies at 611-620 (APTVPPPLPP). A compositionally biased stretch (pro residues) spans 613-625 (TVPPPLPPAPPQP). Residue Ser641 is modified to Phosphoserine. Residues 670–680 (PPTPVLPPQPR) show a composition bias toward pro residues.

As to quaternary structure, interacts with RAC1. Interacts with the exocyst via EXOC4 and EXOC8; required for the localization of both SH3BP1 and the exocyst to the leading edge of migrating cells. Interacts with CD2AP and CGNL1; probably part of a complex at cell junctions. Interacts with CAPZA1; recruits CAPZA1 to forming cell junctions. May interact with AFDN. Interacts with PLXND1; they dissociate upon SEMA3E binding to PLXND1 allowing SH3BP1 to transduce downstream signal through RAC1 inactivation. Interacts with ABL1, GRB2 and SRC (via SH3 domain).

It localises to the cell projection. The protein resides in the cell junction. The protein localises to the tight junction. It is found in the adherens junction. Its subcellular location is the phagocytic cup. It localises to the nucleus. The protein resides in the cytoplasm. The protein localises to the cytosol. Its function is as follows. GTPase activating protein/GAP which specifically converts GTP-bound Rho-type GTPases including RAC1 and CDC42 in their inactive GDP-bound form. By specifically inactivating RAC1 at the leading edge of migrating cells, it regulates the spatiotemporal organization of cell protrusions which is important for proper cell migration. Also negatively regulates CDC42 in the process of actin remodeling and the formation of epithelial cell junctions. Through its GAP activity toward RAC1 and/or CDC42 plays a specific role in phagocytosis of large particles. Specifically recruited by a PI3 kinase/PI3K-dependent mechanism to sites of large particles engagement, inactivates RAC1 and/or CDC42 allowing the reorganization of the underlying actin cytoskeleton required for engulfment. It also plays a role in angiogenesis and the process of repulsive guidance as part of a semaphorin-plexin signaling pathway. Following the binding of PLXND1 to extracellular SEMA3E it dissociates from PLXND1 and inactivates RAC1, inducing the intracellular reorganization of the actin cytoskeleton and the collapse of cells. In Rattus norvegicus (Rat), this protein is SH3 domain-binding protein 1.